Here is a 362-residue protein sequence, read N- to C-terminus: EARP-interacting protein 1 (362 aa).

WD repeat units lie at residues 61–108, 206–246, 250–290, and 319–359; these read HPAG…RTLE, AHIH…SALT, PHAH…SEQQ, and EHED…KYAL.

It belongs to the WD repeat EIPR1 family. In terms of tissue distribution, expressed in the hypodermis and the pharynx.

The protein localises to the cytoplasm. Plays a role in the trafficking of cargo to dense-core vesicles, probably through association with the endosome-associated recycling protein (EARP) complex. Important for neuronal function. This chain is EARP-interacting protein 1, found in Caenorhabditis elegans.